The sequence spans 127 residues: Major sperm protein 33 (127 aa).

Alanine 2 is subject to N-acetylalanine. One can recognise an MSP domain in the interval aspartate 9–asparagine 126.

Sperm.

It is found in the cell projection. The protein localises to the pseudopodium. The protein resides in the cytoplasm. Its subcellular location is the cytoskeleton. In terms of biological role, central component in molecular interactions underlying sperm crawling. Forms an extensive filament system that extends from sperm villipoda, along the leading edge of the pseudopod. The protein is Major sperm protein 33 (msp-33) of Caenorhabditis elegans.